Consider the following 633-residue polypeptide: Probable potassium transport system protein Kup 3 (633 aa).

A run of 12 helical transmembrane segments spans residues 24–44 (LVLAALGVVYGDIGTSPLYAF), 61–81 (VLGILSLIVWALTIVVTLKYV), 114–134 (LVLGVIGASLFLGDAIITPAI), 148–168 (PALSNWVVPITLTIIAVLFFV), 180–200 (FGPVTALWFIVLGVSGAIHIF), 222–242 (IGSAIAVLGAVFLAVTGAEAL), 258–278 (WFSLVFPSLLLNYFGQGAFVL), 298–318 (IPMVCLATAATVIASQAVISG), 348–368 (IFMPQVNNLLFIFVAALVLFF), 377–397 (AYGIAVTGEMFITSILLFIVM), 405–425 (LTAALAVIVPITLIDAGFLAA), and 427–447 (IAKFAEGGWVPVAVASTMALI).

It belongs to the HAK/KUP transporter (TC 2.A.72) family.

It is found in the cell inner membrane. The catalysed reaction is K(+)(in) + H(+)(in) = K(+)(out) + H(+)(out). Transport of potassium into the cell. Likely operates as a K(+):H(+) symporter. The polypeptide is Probable potassium transport system protein Kup 3 (Rhizobium johnstonii (strain DSM 114642 / LMG 32736 / 3841) (Rhizobium leguminosarum bv. viciae)).